A 619-amino-acid polypeptide reads, in one-letter code: MPHYRSRTSTHGRNMAGARALWRATGMKDGDFGKPIIAVVNSFTQFVPGHVHLRDLGALVASEIEAAGGVAKEFNTIAVDDGIAMGHGGMLYSLPSRELIADSVEYMVNAHCADAMVCISNCDKITPGMLMAAMRLNIPVVFVSGGPMEAGKITSPVDGKVIAKLDLVDAMIKAADPNVSDAEAEEVERSACPTCGSCSGMFTANSMNCLTEAIGLALPGNGTIVATHAWRKGLFEQAGRLVVELCRRYYEQDDASVLPRSIATKSAFENAMTLDVAMGGSTNTVLHLLAAAQEAGVDFTMSDIDRISRRVPCLCKAAPATDKYHIEDVHRAGGILGILGELGRADLLDLSCGNVHSGTLGEAINQWDINGGAGEAAQKFFRAAPGGIPTTVAFSQDATFLTLDMDRQTGCIRDKAHAYSQDGGLAVLYGNLAEKGCIVKTAGVDESQWVFTGRARVFESQEDAVEGILGDRVQAGDVVIIRYEGPKGGPGMQEMLYPTSYLKSKGLGKTCALFTDGRFSGGSSGLVIGHASPEAAEGGTIGLVEEGDTIEIDIPNRRIHLAVGDTVLAERRAAMQARGEQAWQPVDRERVVSQALRAYAALATSADRGAVRDLSQLKR.

Aspartate 81 contacts Mg(2+). Cysteine 122 serves as a coordination point for [2Fe-2S] cluster. Mg(2+) contacts are provided by aspartate 123 and lysine 124. Position 124 is an N6-carboxylysine (lysine 124). A [2Fe-2S] cluster-binding site is contributed by cysteine 198. Glutamate 494 provides a ligand contact to Mg(2+). The active-site Proton acceptor is serine 520.

This sequence belongs to the IlvD/Edd family. Homodimer. Requires [2Fe-2S] cluster as cofactor. Mg(2+) is required as a cofactor.

The enzyme catalyses (2R)-2,3-dihydroxy-3-methylbutanoate = 3-methyl-2-oxobutanoate + H2O. The catalysed reaction is (2R,3R)-2,3-dihydroxy-3-methylpentanoate = (S)-3-methyl-2-oxopentanoate + H2O. Its pathway is amino-acid biosynthesis; L-isoleucine biosynthesis; L-isoleucine from 2-oxobutanoate: step 3/4. It participates in amino-acid biosynthesis; L-valine biosynthesis; L-valine from pyruvate: step 3/4. Functionally, functions in the biosynthesis of branched-chain amino acids. Catalyzes the dehydration of (2R,3R)-2,3-dihydroxy-3-methylpentanoate (2,3-dihydroxy-3-methylvalerate) into 2-oxo-3-methylpentanoate (2-oxo-3-methylvalerate) and of (2R)-2,3-dihydroxy-3-methylbutanoate (2,3-dihydroxyisovalerate) into 2-oxo-3-methylbutanoate (2-oxoisovalerate), the penultimate precursor to L-isoleucine and L-valine, respectively. The polypeptide is Dihydroxy-acid dehydratase 1 (Bordetella bronchiseptica (strain ATCC BAA-588 / NCTC 13252 / RB50) (Alcaligenes bronchisepticus)).